Reading from the N-terminus, the 139-residue chain is D-ribose pyranase (139 aa).

His20 serves as the catalytic Proton donor. Residues Asp28, His106, and 128 to 130 (YAN) contribute to the substrate site.

This sequence belongs to the RbsD / FucU family. RbsD subfamily. As to quaternary structure, homodecamer.

The protein resides in the cytoplasm. It carries out the reaction beta-D-ribopyranose = beta-D-ribofuranose. The protein operates within carbohydrate metabolism; D-ribose degradation; D-ribose 5-phosphate from beta-D-ribopyranose: step 1/2. Catalyzes the interconversion of beta-pyran and beta-furan forms of D-ribose. The protein is D-ribose pyranase of Aliivibrio salmonicida (strain LFI1238) (Vibrio salmonicida (strain LFI1238)).